The chain runs to 511 residues: MHLPSLSLAWALAGSSLALPQAEQPVLQDDRASSRAAAVKEAFSHAWDGYKKYAFPHDELHPISNGYGNSRNGWGASAVDALSTAIVMRNATIVHEILDHIATIDYSKTSDTVSLFETTIRYLGGMLSGYDLLKGPAADLVKDTSKVDILLKQSKNLGDILKFAFDTPSGVPYNNINITSHGHDGAKTNGLAVTGTLVLEWTRLSDLTGDPEYAQLSQKAESYLLHPQPSSAEPFPGLIGSNIDIKTGQFTDGHVSWNGGDDSYYEYLIKMYVYDPTRFALYRDRWVAAAESSIEHLASHPASRPDLTFLATYDGGRYGLSSQHLACFDGGNFLLGGTVLDRRDLIDFGLALVDACHETYSQTLTGIGPESFGWDANSVPADQKELYERAGFYVQNGAYILRPEVIESFYYAWRVTGRSEYRDWVWTAFVAINKTCRTGSGYAGLTNVNAENGGGRYDNQESFLFAEVLKYAYLTHSEELMAAEDAWQVQRGDGNQFVFNTEAHPIRVHHS.

The first 18 residues, 1-18 (MHLPSLSLAWALAGSSLA), serve as a signal peptide directing secretion. Asn-90 and Asn-177 each carry an N-linked (GlcNAc...) asparagine glycan. Cys-327 and Cys-356 form a disulfide bridge. The Proton donor role is filled by Glu-370. Residue Asn-433 is glycosylated (N-linked (GlcNAc...) asparagine). Thr-501 is a binding site for Ca(2+).

Belongs to the glycosyl hydrolase 47 family. Monomer. Ca(2+) is required as a cofactor. It depends on Mg(2+) as a cofactor.

It is found in the cytoplasmic vesicle lumen. It catalyses the reaction N(4)-(alpha-D-Man-(1-&gt;2)-alpha-D-Man-(1-&gt;2)-alpha-D-Man-(1-&gt;3)-[alpha-D-Man-(1-&gt;2)-alpha-D-Man-(1-&gt;3)-[alpha-D-Man-(1-&gt;2)-alpha-D-Man-(1-&gt;6)]-alpha-D-Man-(1-&gt;6)]-beta-D-Man-(1-&gt;4)-beta-D-GlcNAc-(1-&gt;4)-beta-D-GlcNAc)-L-asparaginyl-[protein] (N-glucan mannose isomer 9A1,2,3B1,2,3) + 4 H2O = N(4)-(alpha-D-Man-(1-&gt;3)-[alpha-D-Man-(1-&gt;3)-[alpha-D-Man-(1-&gt;6)]-alpha-D-Man-(1-&gt;6)]-beta-D-Man-(1-&gt;4)-beta-D-GlcNAc-(1-&gt;4)-beta-D-GlcNAc)-L-asparaginyl-[protein] (N-glucan mannose isomer 5A1,2) + 4 beta-D-mannose. The catalysed reaction is N(4)-(alpha-D-Man-(1-&gt;2)-alpha-D-Man-(1-&gt;2)-alpha-D-Man-(1-&gt;3)-[alpha-D-Man-(1-&gt;3)-[alpha-D-Man-(1-&gt;2)-alpha-D-Man-(1-&gt;6)]-alpha-D-Man-(1-&gt;6)]-beta-D-Man-(1-&gt;4)-beta-D-GlcNAc-(1-&gt;4)-beta-D-GlcNAc)-L-asparaginyl-[protein] (N-glucan mannose isomer 8A1,2,3B1,3) + 3 H2O = N(4)-(alpha-D-Man-(1-&gt;3)-[alpha-D-Man-(1-&gt;3)-[alpha-D-Man-(1-&gt;6)]-alpha-D-Man-(1-&gt;6)]-beta-D-Man-(1-&gt;4)-beta-D-GlcNAc-(1-&gt;4)-beta-D-GlcNAc)-L-asparaginyl-[protein] (N-glucan mannose isomer 5A1,2) + 3 beta-D-mannose. It functions in the pathway protein modification; protein glycosylation. Functionally, involved in the maturation of Asn-linked oligosaccharides. Progressively trims alpha-1,2-linked mannose residues from Man(9)GlcNAc(2) to produce Man(5)GlcNAc(2). The polypeptide is Probable mannosyl-oligosaccharide alpha-1,2-mannosidase 1B (mns1B) (Aspergillus clavatus (strain ATCC 1007 / CBS 513.65 / DSM 816 / NCTC 3887 / NRRL 1 / QM 1276 / 107)).